The chain runs to 549 residues: MEFAELIKTPRVDNVVLHRPFYPAVEGTLCLTGHHLILSSRQDNTEELWLLHSNIDAIDKRFVGPLGTIIIKCKDFRIIQLDIPGMEECLNIASSIEALSTLDSITLMYPFFYRPMFEVIEDGWHSFLPEQEFELYSSTISEWRLSYVNKEFSVCPSYPPAVIVPKAIDDDALRKVATFRHGGRFPVLSYYHKKNGMVIMRSGQPLTGTNGRRCKEDEKLINATLRAGKRGYIIDTRPLNIAQQARAKGGGFEQEAHYPQWRRIHKSIDRYHILQESLIKLVESCNDQTQNMDRWLSKLEASNWLTHIKEILTTACLAAQCLDREGASILIHGTEGTDSTLQVTSLAQIILEPRSRTIRGFEALIEREWLQAGHPFQQRCAQSAYCNSKQKWESPVFLLFLDCVWQILRQFPCSFEFNENFLIMLFEHAYASQFGTFLGNNESERCKLKLQQKTMSLWSWVNRPSELSKFTNPLFEANNLVIWPSVAPQSLQLWEGIFLRWNRSSKYLDEAYEEMVNIIEYNKELQAKVNLLRRQLAELETEDGVQESP.

Met-1 bears the N-acetylmethionine mark. Residues 4–99 enclose the GRAM domain; that stretch reads AELIKTPRVD…LNIASSIEAL (96 aa). In terms of domain architecture, Myotubularin phosphatase spans 123–498; that stretch reads GWHSFLPEQE…QSLQLWEGIF (376 aa). The stretch at 508–542 forms a coiled coil; the sequence is LDEAYEEMVNIIEYNKELQAKVNLLRRQLAELETE. The residue at position 548 (Ser-548) is a Phosphoserine.

This sequence belongs to the protein-tyrosine phosphatase family. Non-receptor class myotubularin subfamily. Homodimer. Heterodimer (via C-terminus) with lipid phosphatase MTMR6 (via C-terminus). Heterodimer (via coiled coil domain) with lipid phosphatase MTMR7 (via C-terminus). Heterodimer with lipid phosphatase MTMR8.

The protein resides in the cytoplasm. The protein localises to the cell projection. It localises to the ruffle membrane. Its subcellular location is the perinuclear region. It is found in the endoplasmic reticulum. Functionally, acts as an adapter for myotubularin-related phosphatases. Increases lipid phosphatase MTMR6 catalytic activity, specifically towards phosphatidylinositol 3,5-bisphosphate, and MTMR6 binding affinity for phosphorylated phosphatidylinositols. Positively regulates lipid phosphatase MTMR7 catalytic activity. Increases MTMR8 catalytic activity towards phosphatidylinositol 3-phosphate. The formation of the MTMR6-MTMR9 complex, stabilizes both MTMR6 and MTMR9 protein levels. Stabilizes MTMR8 protein levels. Plays a role in the late stages of macropinocytosis possibly by regulating MTMR6-mediated dephosphorylation of phosphatidylinositol 3-phosphate in membrane ruffles. Negatively regulates autophagy, in part via its association with MTMR8. Negatively regulates DNA damage-induced apoptosis, in part via its association with MTMR6. Does not bind mono-, di- and tri-phosphorylated phosphatidylinositols, phosphatidic acid and phosphatidylserine. This Bos taurus (Bovine) protein is Myotubularin-related protein 9 (MTMR9).